Consider the following 341-residue polypeptide: Heat-inducible transcription repressor HrcA (341 aa).

This sequence belongs to the HrcA family.

Its function is as follows. Negative regulator of class I heat shock genes (grpE-dnaK-dnaJ and groELS operons). Prevents heat-shock induction of these operons. In Corynebacterium glutamicum (strain ATCC 13032 / DSM 20300 / JCM 1318 / BCRC 11384 / CCUG 27702 / LMG 3730 / NBRC 12168 / NCIMB 10025 / NRRL B-2784 / 534), this protein is Heat-inducible transcription repressor HrcA.